The following is a 299-amino-acid chain: MNEFDRVRDYLTDLQDRICAAVEAADGKARFAEDLWKREEGGGGRTRILRDGAVFEQAGIGFSDVSGTRLPPSASAHRPELAGATWRACGVSLVFHPHNPYIPTTHMNVRYFRAERDGEVVAAWFGGGFDLTPFYPFDEDVQHWHRVAQALCVPFGQERYAAHKRWCDEYFFLRHRNETRGVGGLFFDDLGQDFERDFAYQRAVGDGFLDAYIPIVQRRKDTPYGEREREFQLYRRGRYVEFNLVYDRGTLFGLQSGGRAESILMSLPPRVRWEYGFTPEPGSAEARLADYLIPRDWLG.

A substrate-binding site is contributed by Ser-92. Residues His-96 and His-106 each coordinate a divalent metal cation. Residue His-106 is the Proton donor of the active site. 108 to 110 is a binding site for substrate; sequence NVR. A divalent metal cation is bound by residues His-145 and His-175. The interval 239 to 274 is important for dimerization; the sequence is YVEFNLVYDRGTLFGLQSGGRAESILMSLPPRVRWE. 257-259 is a substrate binding site; the sequence is GGR.

The protein belongs to the aerobic coproporphyrinogen-III oxidase family. Homodimer. The cofactor is a divalent metal cation.

The protein localises to the cytoplasm. The enzyme catalyses coproporphyrinogen III + O2 + 2 H(+) = protoporphyrinogen IX + 2 CO2 + 2 H2O. It functions in the pathway porphyrin-containing compound metabolism; protoporphyrin-IX biosynthesis; protoporphyrinogen-IX from coproporphyrinogen-III (O2 route): step 1/1. Its function is as follows. Involved in the heme biosynthesis. Catalyzes the aerobic oxidative decarboxylation of propionate groups of rings A and B of coproporphyrinogen-III to yield the vinyl groups in protoporphyrinogen-IX. This Xanthomonas axonopodis pv. citri (strain 306) protein is Oxygen-dependent coproporphyrinogen-III oxidase.